We begin with the raw amino-acid sequence, 152 residues long: Large ribosomal subunit protein uL15 (152 aa).

Positions 1–57 (MTSTLNTLKSNSGSRKKKLRKGRGIAAGQGASCGFGMRGQKSRSGRPTRPGFEGGQM) are disordered. Basic residues predominate over residues 14-23 (SRKKKLRKGR). Residues 25 to 37 (IAAGQGASCGFGM) are compositionally biased toward gly residues.

This sequence belongs to the universal ribosomal protein uL15 family. In terms of assembly, part of the 50S ribosomal subunit.

In terms of biological role, binds to the 23S rRNA. This Prochlorococcus marinus (strain AS9601) protein is Large ribosomal subunit protein uL15.